A 203-amino-acid polypeptide reads, in one-letter code: Urease accessory protein UreG (203 aa).

Residue 14–21 coordinates GTP; it reads GPVGAGKT.

This sequence belongs to the SIMIBI class G3E GTPase family. UreG subfamily. In terms of assembly, homodimer. UreD, UreF and UreG form a complex that acts as a GTP-hydrolysis-dependent molecular chaperone, activating the urease apoprotein by helping to assemble the nickel containing metallocenter of UreC. The UreE protein probably delivers the nickel.

The protein localises to the cytoplasm. In terms of biological role, facilitates the functional incorporation of the urease nickel metallocenter. This process requires GTP hydrolysis, probably effectuated by UreG. The polypeptide is Urease accessory protein UreG (Jannaschia sp. (strain CCS1)).